We begin with the raw amino-acid sequence, 460 residues long: Hemopexin (460 aa).

A signal peptide spans 1–23 (MARTVVALNILVLLGLCWSLAVA). 2 N-linked (GlcNAc...) asparagine glycosylation sites follow: asparagine 38 and asparagine 64. Cystine bridges form between cysteine 50/cysteine 230, cysteine 148/cysteine 153, and cysteine 187/cysteine 199. Hemopexin repeat units lie at residues 53–93 (AWSF…WKNP), 94–138 (VTSV…FPGI), 139–183 (PYPP…SWPA), and 184–230 (VGNC…FISC). Histidine 79 contributes to the heme binding site. Histidine 149 is a binding site for heme. Asparagine 186 is a glycosylation site (N-linked (GlcNAc...) asparagine). A heme-binding site is contributed by histidine 235. 2 N-linked (GlcNAc...) asparagine glycosylation sites follow: asparagine 240 and asparagine 246. 3 disulfides stabilise this stretch: cysteine 255–cysteine 458, cysteine 364–cysteine 406, and cysteine 416–cysteine 433. 4 Hemopexin repeats span residues 257–302 (ADPG…WPQG), 303–350 (PSAV…LGSP), 355–394 (LDTIDAAFSCPGSSKLYVTSGRRLWWLDLKSGAQATWAEL), and 398–448 (HEKV…SLPQ). Histidine 291 provides a ligand contact to heme.

Belongs to the hemopexin family. In terms of tissue distribution, expressed by the liver and secreted in plasma.

The protein localises to the secreted. In terms of biological role, binds heme and transports it to the liver for breakdown and iron recovery, after which the free hemopexin returns to the circulation. The polypeptide is Hemopexin (Hpx) (Rattus norvegicus (Rat)).